We begin with the raw amino-acid sequence, 429 residues long: Alpha-L-rhamnosidase rgxB (429 aa).

The signal sequence occupies residues Met-1–Ser-20. Residues Asn-67, Asn-77, Asn-97, Asn-103, Asn-112, Asn-135, and Asn-219 are each glycosylated (N-linked (GlcNAc...) asparagine). The PbH1 1 repeat unit spans residues Ser-217–Ala-238. Asp-231 acts as the Proton donor in catalysis. Residues Asn-239, Asn-247, Asn-278, and Asn-344 are each glycosylated (N-linked (GlcNAc...) asparagine). PbH1 repeat units lie at residues Ser-240–Ser-260 and Val-271–Thr-292. Cys-374 and Cys-380 are joined by a disulfide. N-linked (GlcNAc...) asparagine glycans are attached at residues Asn-387, Asn-395, and Asn-414.

This sequence belongs to the glycosyl hydrolase 28 family.

Its subcellular location is the secreted. The enzyme catalyses Hydrolysis of terminal non-reducing alpha-L-rhamnose residues in alpha-L-rhamnosides.. Its function is as follows. Alpha-L-rhamnosidase which is able to degrade p-nitrophenyl-alpha-L-rhamnopyranoside (pnp_Rha). The natural substrate of this enzyme has not been identified yet. This Aspergillus niger (strain ATCC MYA-4892 / CBS 513.88 / FGSC A1513) protein is Alpha-L-rhamnosidase rgxB (rgxB).